The chain runs to 285 residues: 4-diphosphocytidyl-2-C-methyl-D-erythritol kinase (285 aa).

The active site involves Lys-10. ATP is bound at residue 93-103; the sequence is PIGGGLGGGSS. Asp-135 is a catalytic residue.

Belongs to the GHMP kinase family. IspE subfamily.

It catalyses the reaction 4-CDP-2-C-methyl-D-erythritol + ATP = 4-CDP-2-C-methyl-D-erythritol 2-phosphate + ADP + H(+). Its pathway is isoprenoid biosynthesis; isopentenyl diphosphate biosynthesis via DXP pathway; isopentenyl diphosphate from 1-deoxy-D-xylulose 5-phosphate: step 3/6. In terms of biological role, catalyzes the phosphorylation of the position 2 hydroxy group of 4-diphosphocytidyl-2C-methyl-D-erythritol. This chain is 4-diphosphocytidyl-2-C-methyl-D-erythritol kinase, found in Ruthia magnifica subsp. Calyptogena magnifica.